A 485-amino-acid polypeptide reads, in one-letter code: Glutamyl-tRNA(Gln) amidotransferase subunit A (485 aa).

Catalysis depends on charge relay system residues Lys76 and Ser151. Catalysis depends on Ser175, which acts as the Acyl-ester intermediate.

It belongs to the amidase family. GatA subfamily. In terms of assembly, heterotrimer of A, B and C subunits.

The enzyme catalyses L-glutamyl-tRNA(Gln) + L-glutamine + ATP + H2O = L-glutaminyl-tRNA(Gln) + L-glutamate + ADP + phosphate + H(+). In terms of biological role, allows the formation of correctly charged Gln-tRNA(Gln) through the transamidation of misacylated Glu-tRNA(Gln) in organisms which lack glutaminyl-tRNA synthetase. The reaction takes place in the presence of glutamine and ATP through an activated gamma-phospho-Glu-tRNA(Gln). This chain is Glutamyl-tRNA(Gln) amidotransferase subunit A, found in Thiobacillus denitrificans (strain ATCC 25259 / T1).